Consider the following 225-residue polypeptide: RNA-binding protein 24 (225 aa).

One can recognise an RRM domain in the interval 11 to 88 (TKIFVGGLPY…RKANVNLAYL (78 aa)).

It localises to the nucleus. Its subcellular location is the cytoplasm. Functionally, multifunctional RNA-binding protein involved in the regulation of pre-mRNA splicing, mRNA stability and mRNA translation important for cell fate decision and differentiation. Plays a major role in pre-mRNA alternative splicing regulation. Mediates preferentially muscle-specific exon inclusion in numerous mRNAs important for striated cardiac and skeletal muscle cell differentiation. Binds to intronic splicing enhancer (ISE) composed of stretches of GU-rich motifs localized in flanking intron of exon that will be included by alternative splicing. Involved in embryonic stem cell (ESC) transition to cardiac cell differentiation by promoting pre-mRNA alternative splicing events of several pluripotency and/or differentiation genes. Plays a role in the regulation of mRNA stability and mRNA translation to which it is bound. Involved in myogenic differentiation by regulating MYOG levels. Binds to a huge amount of mRNAs. Involved in embryonic heart development and myogenic differentiation of somitic muscle progenitors. The protein is RNA-binding protein 24 of Gallus gallus (Chicken).